Here is a 293-residue protein sequence, read N- to C-terminus: Elongation factor Ts (293 aa).

Residues 79–82 are involved in Mg(2+) ion dislocation from EF-Tu; that stretch reads TDFV. The residue at position 149 (Ser-149) is a Phosphoserine.

The protein belongs to the EF-Ts family.

It localises to the cytoplasm. Functionally, associates with the EF-Tu.GDP complex and induces the exchange of GDP to GTP. It remains bound to the aminoacyl-tRNA.EF-Tu.GTP complex up to the GTP hydrolysis stage on the ribosome. In Bacillus subtilis (strain 168), this protein is Elongation factor Ts (tsf).